A 221-amino-acid chain; its full sequence is Putative gene 53 protein (221 aa).

This is Putative gene 53 protein (53) from Bacillus phage SP01 (Bacteriophage SP01).